A 404-amino-acid polypeptide reads, in one-letter code: Synaptic vesicle membrane protein VAT-1 homolog (404 aa).

Residues Met1–Ser55 form a disordered region. Ser2 carries the post-translational modification N-acetylserine. Ser2 carries the phosphoserine modification. The span at Glu9–Gly24 shows a compositional bias: low complexity. Phosphoserine occurs at positions 31 and 40.

Belongs to the zinc-containing alcohol dehydrogenase family. Quinone oxidoreductase subfamily. As to quaternary structure, interacts with MFN1 and MFN2. In terms of tissue distribution, ubiquitously expressed.

The protein localises to the cytoplasm. It localises to the mitochondrion outer membrane. Its function is as follows. Plays a part in calcium-regulated keratinocyte activation in epidermal repair mechanisms. Has no effect on cell proliferation. Possesses ATPase activity. May negatively regulate mitochondrial fusion. The polypeptide is Synaptic vesicle membrane protein VAT-1 homolog (Vat1) (Rattus norvegicus (Rat)).